A 1196-amino-acid chain; its full sequence is Phosphoglucan, water dikinase, chloroplastic (1196 aa).

A chloroplast-targeting transit peptide spans 1-54; it reads MESIGSHCCSSPFTFITRNSSSSLPRLVNITHRVNLSHQSHRLRNSNSRLTCTA. An N-acetylthreonine modification is found at Thr55. Residues 66–166 form the CBM20 domain; sequence KKDGSGTKVR…NFSVVCHWDA (101 aa). Residues 174 to 200 form a disordered region; that stretch reads PQEVGNDDDVGDGGHERDNHDVGDDRV. Positions 185–200 are enriched in basic and acidic residues; that stretch reads DGGHERDNHDVGDDRV. His759 serves as the catalytic Tele-phosphohistidine intermediate. The disordered stretch occupies residues 804 to 855; that stretch reads LSTEGRSRTSKSSATKKTDKNSLSKKKTDKKSLSIDDEESKPGSSSSNSLLY.

It belongs to the PEP-utilizing enzyme family. Homodimer. Mg(2+) serves as cofactor. In terms of tissue distribution, in all starch containing tissues (e.g. roots, leaves, stems, inflorescence and siliques).

The protein resides in the plastid. It is found in the chloroplast. The catalysed reaction is [(1-&gt;4)-6-phospho-alpha-D-glucosyl](n) + n ATP + n H2O = [(1-&gt;4)-3,6-bisphospho-alpha-D-glucosyl](n) + n AMP + n phosphate + 2n H(+). Functionally, mediates the incorporation of phosphate into starch-like phospho-alpha-glucan, mostly at the C-3 position of glucose units. Required for starch degradation, suggesting that the phosphate content of starch regulates its degradability. The sequence is that of Phosphoglucan, water dikinase, chloroplastic (GWD3) from Arabidopsis thaliana (Mouse-ear cress).